Reading from the N-terminus, the 249-residue chain is MEAAADGPAETRSRVEKDSRRAKKDSPAKTQSPAQDTSIMLRNNADTGKVPALPEHKKKRKGYLPAESVKILRDWMYKHRFRAYPSEAEKRMLSKKTNLSLSQISNWFINARRRILPDMLQRRGNDPIVGHKTGKDAHATHLRSTDASVPAKSGPRGSDNVQSLPLRSSPKGQMSGEKIPEPGSAPSQKLTVIAQPKKKVKVSNITSLSSPERVSTEEYADFSSFQLLVDAAVQRAAELELEKKQESNP.

Disordered stretches follow at residues 1–62 (MEAA…KRKG) and 126–192 (DPIV…KLTV). Residues 9-27 (AETRSRVEKDSRRAKKDSP) are compositionally biased toward basic and acidic residues. Polar residues predominate over residues 28 to 46 (AKTQSPAQDTSIMLRNNAD). Residues 55–118 (EHKKKRKGYL…INARRRILPD (64 aa)) constitute a DNA-binding region (homeobox; TALE-type). The segment covering 159-172 (DNVQSLPLRSSPKG) has biased composition (polar residues).

This sequence belongs to the TALE/TGIF homeobox family.

It localises to the nucleus. In terms of biological role, may have a transcription role in testis. In Macaca fascicularis (Crab-eating macaque), this protein is Homeobox protein TGIF2LX (TGIF2LX).